The following is an 89-amino-acid chain: Small ribosomal subunit protein uS15 (89 aa).

This sequence belongs to the universal ribosomal protein uS15 family. In terms of assembly, part of the 30S ribosomal subunit. Forms a bridge to the 50S subunit in the 70S ribosome, contacting the 23S rRNA.

One of the primary rRNA binding proteins, it binds directly to 16S rRNA where it helps nucleate assembly of the platform of the 30S subunit by binding and bridging several RNA helices of the 16S rRNA. Functionally, forms an intersubunit bridge (bridge B4) with the 23S rRNA of the 50S subunit in the ribosome. The chain is Small ribosomal subunit protein uS15 from Acholeplasma laidlawii (strain PG-8A).